A 208-amino-acid chain; its full sequence is Holliday junction branch migration complex subunit RuvA (208 aa).

Positions 1–69 (MIGFLQGYVV…EDQMVLFGFA (69 aa)) are domain I. A domain II region spans residues 70–148 (VVAERDLFRQ…EWRDQAGLKT (79 aa)). The segment at 149–159 (LPSAGPIDSVQ) is flexible linker. The domain III stretch occupies residues 159-208 (QEDVEMTLLALGYTSQEVMRALQAVGQNTALAKNSDTEAWIREAIAWLSQ).

The protein belongs to the RuvA family. Homotetramer. Forms an RuvA(8)-RuvB(12)-Holliday junction (HJ) complex. HJ DNA is sandwiched between 2 RuvA tetramers; dsDNA enters through RuvA and exits via RuvB. An RuvB hexamer assembles on each DNA strand where it exits the tetramer. Each RuvB hexamer is contacted by two RuvA subunits (via domain III) on 2 adjacent RuvB subunits; this complex drives branch migration. In the full resolvosome a probable DNA-RuvA(4)-RuvB(12)-RuvC(2) complex forms which resolves the HJ.

Its subcellular location is the cytoplasm. Functionally, the RuvA-RuvB-RuvC complex processes Holliday junction (HJ) DNA during genetic recombination and DNA repair, while the RuvA-RuvB complex plays an important role in the rescue of blocked DNA replication forks via replication fork reversal (RFR). RuvA specifically binds to HJ cruciform DNA, conferring on it an open structure. The RuvB hexamer acts as an ATP-dependent pump, pulling dsDNA into and through the RuvAB complex. HJ branch migration allows RuvC to scan DNA until it finds its consensus sequence, where it cleaves and resolves the cruciform DNA. The protein is Holliday junction branch migration complex subunit RuvA of Acaryochloris marina (strain MBIC 11017).